We begin with the raw amino-acid sequence, 456 residues long: GTP cyclohydrolase 1 (456 aa).

Cysteine 340, histidine 343, and cysteine 412 together coordinate Zn(2+).

It belongs to the GTP cyclohydrolase I family. In terms of assembly, homodimer. Expressed in leaves and unripe fruits.

It carries out the reaction GTP + H2O = 7,8-dihydroneopterin 3'-triphosphate + formate + H(+). It participates in cofactor biosynthesis; 7,8-dihydroneopterin triphosphate biosynthesis; 7,8-dihydroneopterin triphosphate from GTP: step 1/1. Its function is as follows. GTP cyclohydrolase 1 is the first enzyme in the biosynthetic pathway leading to folic acid. The protein is GTP cyclohydrolase 1 (GCH1) of Solanum lycopersicum (Tomato).